Here is a 583-residue protein sequence, read N- to C-terminus: 15-cis-phytoene desaturase, chloroplastic/chromoplastic (583 aa).

A chloroplast and chromoplast-targeting transit peptide spans 1-111 (MPQIGLVSAV…FRASPRPTKP (111 aa)). FAD-binding positions include 118 to 134 (GAGLGGLSTAKYLADAG), 141 to 142 (EA), K149, 166 to 167 (HI), and Y172. Position 307 (R307) interacts with substrate. FAD is bound by residues I349 and D538. A546 provides a ligand contact to substrate. M548 contacts FAD.

It belongs to the carotenoid/retinoid oxidoreductase family. In terms of assembly, homotetramer. The cofactor is FAD.

The protein localises to the plastid. Its subcellular location is the chloroplast. It is found in the chromoplast. It localises to the membrane. The enzyme catalyses 2 a plastoquinone + 15-cis-phytoene = 9,9',15-tri-cis-zeta-carotene + 2 a plastoquinol. The protein operates within carotenoid biosynthesis; lycopene biosynthesis. Converts phytoene into zeta-carotene via the intermediary of phytofluene by the symmetrical introduction of two double bonds at the C-11 and C-11' positions of phytoene with a concomitant isomerization of two neighboring double bonds at the C9 and C9' positions from trans to cis. The polypeptide is 15-cis-phytoene desaturase, chloroplastic/chromoplastic (PDS) (Solanum lycopersicum (Tomato)).